The chain runs to 705 residues: Elongation factor G (705 aa).

Residues 6 to 282 (NKVRNIGIMA…AVVDFLPSPL (277 aa)) form the tr-type G domain. GTP is bound by residues 15–22 (AHIDAGKT), 79–83 (DTPGH), and 133–136 (NKMD).

The protein belongs to the TRAFAC class translation factor GTPase superfamily. Classic translation factor GTPase family. EF-G/EF-2 subfamily.

It is found in the cytoplasm. In terms of biological role, catalyzes the GTP-dependent ribosomal translocation step during translation elongation. During this step, the ribosome changes from the pre-translocational (PRE) to the post-translocational (POST) state as the newly formed A-site-bound peptidyl-tRNA and P-site-bound deacylated tRNA move to the P and E sites, respectively. Catalyzes the coordinated movement of the two tRNA molecules, the mRNA and conformational changes in the ribosome. The chain is Elongation factor G from Corynebacterium glutamicum (strain ATCC 13032 / DSM 20300 / JCM 1318 / BCRC 11384 / CCUG 27702 / LMG 3730 / NBRC 12168 / NCIMB 10025 / NRRL B-2784 / 534).